The chain runs to 511 residues: MKCLLYLALLFIGVYCKFTTVFPHNKKGDWKNVPSNYHYCPSSSDLNWHNDLIGTALQVKMPKSHKAIQADGWMCHASKWVTTCDFRWYGPKYITHSIRSFTPSVEQCKESIEQTKQGTWLNPGFPPQSCGYATVTDAEAVIVQVTPHHVLVDEYTGEWVDSQFINGKCSDDICPTVHNSTTWHSDYKVKGLCDSNLISMDITFFSEDGELSSLGKEGTGFRSNYFAYETGDKACKMQYCKHWGVRLPSGVWFEMADKNLFAAAKFPECPEGSSISAPSQTSVDVSLIQDVERILDYSLCQETWSKIRAGLPISPVDLSYLAPKNPGTGPAFTIINGTLKYFETRYIRVDIAAPILSRMVGMISGTTTERELWEDWAPYEDVEIGPNGVLRTSSGYKFPLYMIGHGMLDSDLHLSSKAQVFEHPHIPDATSQLPDDETLFFGDTGLSKDPIELVEGWFSGWKSSIASFFFIIGLIIGLFFVLRIGVYLCIKLKHTNKRQIYTDIEMNRLGK.

An N-terminal signal peptide occupies residues 1–16 (MKCLLYLALLFIGVYC). Residues 17 to 467 (KFTTVFPHNK…FSGWKSSIAS (451 aa)) are Virion surface-facing. Positions 18-35 (FTTVFPHNKKGDWKNVPS) are trimerization. Disulfide bonds link C40/C300, C75/C108, C84/C130, C169/C174, C193/C240, and C235/C269. The tract at residues 53–172 (IGTALQVKMP…QFINGKCSDD (120 aa)) is fusion peptide. N179 carries an N-linked (GlcNAc...) asparagine; by host glycan. The trimerization stretch occupies residues 259-309 (NLFAAAKFPECPEGSSISAPSQTSVDVSLIQDVERILDYSLCQETWSKIRA). N-linked (GlcNAc...) asparagine; by host glycosylation occurs at N336. A trimerization region spans residues 383–405 (EIGPNGVLRTSSGYKFPLYMIGH). The helical transmembrane segment at 468-488 (FFFIIGLIIGLFFVLRIGVYL) threads the bilayer. A lipid anchor (S-palmitoyl cysteine; by host) is attached at C489. Topologically, residues 489 to 511 (CIKLKHTNKRQIYTDIEMNRLGK) are intravirion. A basolateral targeting ex vivo motif is present at residues 496-506 (NKRQIYTDIEM).

Belongs to the vesiculovirus glycoprotein family. In terms of assembly, homotrimer. Interacts with host LDL at target cell surface. In terms of processing, glycosylated by host. Palmitoylated by host.

It is found in the virion membrane. Its subcellular location is the host membrane. Its function is as follows. Attaches the virus to host LDL receptors, inducing clathrin-dependent endocytosis of the virion. In the endosome, the acidic pH induces conformational changes in the glycoprotein trimer, which trigger fusion between virus and endosomal membrane. The sequence is that of Glycoprotein (G) from Aedes (Bovine).